Reading from the N-terminus, the 299-residue chain is Methionine aminopeptidase (299 aa).

A substrate-binding site is contributed by H64. The a divalent metal cation site is built by D84, D95, and H158. H166 contributes to the substrate binding site. Residues E191 and E284 each contribute to the a divalent metal cation site.

The protein belongs to the peptidase M24A family. Methionine aminopeptidase archaeal type 2 subfamily. As to quaternary structure, monomer. Co(2+) is required as a cofactor. The cofactor is Zn(2+). Requires Mn(2+) as cofactor. It depends on Fe(2+) as a cofactor.

The catalysed reaction is Release of N-terminal amino acids, preferentially methionine, from peptides and arylamides.. Removes the N-terminal methionine from nascent proteins. The N-terminal methionine is often cleaved when the second residue in the primary sequence is small and uncharged (Met-Ala-, Cys, Gly, Pro, Ser, Thr, or Val). The chain is Methionine aminopeptidase from Methanothermobacter thermautotrophicus (strain ATCC 29096 / DSM 1053 / JCM 10044 / NBRC 100330 / Delta H) (Methanobacterium thermoautotrophicum).